The primary structure comprises 163 residues: Beta-lactoglobulin-2 (163 aa).

2 cysteine pairs are disulfide-bonded: C66–C161 and C106–C120.

It belongs to the calycin superfamily. Lipocalin family. In terms of assembly, monomer.

It is found in the secreted. In terms of biological role, lactoglobulin is the primary component of whey, it binds retinol and is probably involved in the transport of that molecule. The polypeptide is Beta-lactoglobulin-2 (LGB2) (Equus asinus (Donkey)).